Consider the following 288-residue polypeptide: Energy-coupling factor transporter ATP-binding protein EcfA3 (288 aa).

One can recognise an ABC transporter domain in the interval 3–245; sequence INFRNVSFSY…ESYLRKEKLR (243 aa). 40–47 serves as a coordination point for ATP; it reads GHTGSGKS.

It belongs to the ABC transporter superfamily. Energy-coupling factor EcfA family. Forms a stable energy-coupling factor (ECF) transporter complex composed of 2 membrane-embedded substrate-binding proteins (S component), 2 ATP-binding proteins (A component) and 2 transmembrane proteins (T component).

It is found in the cell membrane. Functionally, ATP-binding (A) component of a common energy-coupling factor (ECF) ABC-transporter complex. Unlike classic ABC transporters this ECF transporter provides the energy necessary to transport a number of different substrates. The chain is Energy-coupling factor transporter ATP-binding protein EcfA3 from Oenococcus oeni (strain ATCC BAA-331 / PSU-1).